A 778-amino-acid polypeptide reads, in one-letter code: Lon protease (778 aa).

The Lon N-terminal domain maps to 6–207; that stretch reads LPLMALRDMV…TVISMLNSNI (202 aa). Residue 356–363 participates in ATP binding; the sequence is GPPGVGKT. The Lon proteolytic domain occupies 592–773; it reads EDQIGSTTGL…DQVLKHALVG (182 aa). Catalysis depends on residues S679 and K722.

It belongs to the peptidase S16 family. Homohexamer. Organized in a ring with a central cavity.

The protein resides in the cytoplasm. The catalysed reaction is Hydrolysis of proteins in presence of ATP.. ATP-dependent serine protease that mediates the selective degradation of mutant and abnormal proteins as well as certain short-lived regulatory proteins. Required for cellular homeostasis and for survival from DNA damage and developmental changes induced by stress. Degrades polypeptides processively to yield small peptide fragments that are 5 to 10 amino acids long. Binds to DNA in a double-stranded, site-specific manner. The polypeptide is Lon protease (Rickettsia conorii (strain ATCC VR-613 / Malish 7)).